A 935-amino-acid chain; its full sequence is Myocardin (935 aa).

The MEF2C-binding motif lies at 12–27 (IRRKFRSVLQLRLQQR). 3 RPEL repeats span residues 18-43 (SVLQLRLQQRRTQEQLANQGLIPPLK), 62-87 (DSLRRKGRNRSDRASLVTMHILQAST), and 106-131 (DDLNEKIALRPGPLELVEKNILPMDS). A disordered region spans residues 37–73 (GLIPPLKGPTEFHDPRKQLDSAKTEDSLRRKGRNRSD). The span at 46-73 (TEFHDPRKQLDSAKTEDSLRRKGRNRSD) shows a compositional bias: basic and acidic residues. The HDAC5-binding stretch occupies residues 153-201 (FEDDSSRDGLSPDQARSEDPQGSTGSTPDIKSTEAPLDTIQDLTPGSES). The tract at residues 155–283 (DDSSRDGLSP…SPPPMDSAYA (129 aa)) is disordered. Composition is skewed to polar residues over residues 172-182 (PQGSTGSTPDI) and 206-216 (AASQPGNQSDP). The span at 244 to 261 (NRHKKPKDPKPKVKKLKY) shows a compositional bias: basic residues. Residues 287–322 (QQQQLFLQLQILSQQQQQQQQQQQQQQQQQQQQQRF) adopt a coiled-coil conformation. Residues 337 to 378 (EQMARNPNPSSTPLSNTPLSPVKNSISGQTGVSSLKPGPLPP) form a disordered region. A compositionally biased stretch (low complexity) spans 342–357 (NPNPSSTPLSNTPLSP). The span at 358 to 369 (VKNSISGQTGVS) shows a compositional bias: polar residues. Residues 380–414 (LDDLKVSELRQQLRIRGLPVSGTKTALVDRLRPFQ) form the SAP domain. Residues serine 454, serine 458, serine 462, and serine 466 each carry the phosphoserine; by GSK3-beta modification. The interval 498-518 (ESLLSSLNGGSGPSEPDGLDS) is disordered. Residues 519–563 (EKDKMLVEKQKVINQLTWKLRQEQRQVEELRMQLQKQKSSCSDQK) adopt a coiled-coil conformation. Residues 579-605 (SCPFAPQQASGKGQGHSSDSPPPACET) form a disordered region. A compositionally biased stretch (polar residues) spans 585-597 (QQASGKGQGHSSD). A phosphoserine; by GSK3-beta mark is found at serine 624, serine 628, serine 632, and serine 636. Residues 654-731 (NNHYFLASSS…DAVKQQMTRS (78 aa)) form a disordered region. Polar residues predominate over residues 660 to 691 (ASSSGAQRENHGVSSPSSSQGCAQMTGLQSSD). Positions 695–709 (PTFSIPSPTFSKSSS) are enriched in low complexity. The interval 714 to 935 (ITQPPSYEDA…SPMDLHLQQW (222 aa)) is required for interaction with and ubiquitination by STUB1. Serine 812, serine 859, and serine 866 each carry phosphoserine; by MAPK1 and MAPK3. Threonine 893 is modified (phosphothreonine; by MAPK1 and MAPK3).

In terms of assembly, homodimer. Interacts with MLLT7/FOXO4. Interacts with SRF, its association does not depend on specific DNA sequences for ternary complex formation. Interacts (via C-terminal) with EP300 (via CREB-binding domain). Interacts with HDAC4 and HDAC5. Interacts with MEF2C. Interacts (via C-terminus) with STUB1/CHIP. Interacts with PURB. Ubiquitinated; by STUB1/CHIP at the C-terminus, leading to its degradation by the proteasome. Phosphorylation by GSK3B is required for STUB1/CHIP-mediated ubiquitination. Post-translationally, phosphorylation negatively regulates transcriptional activity. Phosphorylated; by GSK3B. Expressed in smooth muscle cell-containing tissues. Expressed in the heart. Expressed in the aorta and bladder. Weakly expression in the lung, testis and kidney. Weakly expressed in the stomach. Weakly expressed in the intestine and colon. As to expression, expressed in the heart. In terms of tissue distribution, predominantly expressed in cardiac muscle. Predominantly expressed in smooth muscle cell-rich tissues.

It is found in the nucleus speckle. Its function is as follows. Smooth muscle cells (SM) and cardiac muscle cells-specific transcriptional factor which uses the canonical single or multiple CArG boxes DNA sequence. Acts as a cofactor of serum response factor (SRF) with the potential to modulate SRF-target genes. Plays a crucial role in cardiogenesis, urinary bladder development, and differentiation of the smooth muscle cell lineage (myogenesis). Positively regulates the transcription of genes involved in vascular smooth muscle contraction. In terms of biological role, positively regulates the activation of smooth muscle cell gene promoter regions. Functionally, positively regulates the activation of smooth muscle cell gene promoter regions. Activation of the MYH6 promoter is enhanced in the presence of MEF2C. This chain is Myocardin (Myocd), found in Mus musculus (Mouse).